The chain runs to 258 residues: Venom plasminogen activator (258 aa).

The signal sequence occupies residues 1-18 (MVLIRVLANLLILQLSYA). A propeptide spanning residues 19–24 (QKSSEL) is cleaved from the precursor. The Peptidase S1 domain maps to 25–249 (VVGGDECNIN…YTDWIQSIIS (225 aa)). 6 disulfide bridges follow: Cys-31–Cys-163, Cys-50–Cys-66, Cys-98–Cys-256, Cys-142–Cys-210, Cys-174–Cys-189, and Cys-200–Cys-225. N-linked (GlcNAc...) asparagine glycosylation occurs at Asn-44. Catalysis depends on charge relay system residues His-65 and Asp-110. Ser-204 (charge relay system) is an active-site residue.

This sequence belongs to the peptidase S1 family. Snake venom subfamily. As to quaternary structure, monomer. As to expression, expressed by the venom gland.

It localises to the secreted. Snake venom serine protease that activates plasminogen. Shows a preferential cleavage at Arg-|-Xaa instead of Lys-|-Xaa bonds. The protein is Venom plasminogen activator of Agkistrodon piscivorus leucostoma (Western cottonmouth).